We begin with the raw amino-acid sequence, 590 residues long: MHRYRSHTCGALRDSHIDQTVRLSGWCHRIRDHGGVLFIDLRDHYGLTQCVADPDSPAFAQAEKLRSEWVVRIDGKARLRPAGTENPELPTGQIEIYINEIEVLGPADELPLPVFGEQEYPEDIRLKYRFLDLRREKLHQNIMTRGAIVDSMRKRMKEQGFFEFQTPILTASSPEGARDFLVPSRIHPGKFYALPQAPQQYKQLLMMSGFDRYFQIAPCFRDEDPRADRLPGEFYQLDLEMSFVEQDDVFAAVEPVVTGVFEEFAKGKPVTKNWPRIPFAESLRKYGTDKPDLRNPLLMQDVSQHFRGSGFKVFARMLEDSKNQVWAIPGPGGGSRAFCDRMNSWAQGEGQPGLGYIMWREGGEGAGPLANNIGPERTEAIRQQLGLKAGDAAFFVAGDPAKFWKFAGLARTKLGEELNVIDKDRFELAWIVDFPMYEYNEDEKKVDFSHNPFSMPQGGLDALNNQDPLTIKAFQYDITCNGYEIASGGIRNHRPEAMVKAFEIAGYGENDVVERFGGMYRAFQYGAPPHGGMAAGVDRVVMLLCGTTNLREISLFPMNQRAEDLLMGAPSDVTPKQLRELHIRLNLPQD.

L-aspartate is bound at residue Glu175. Residues 199 to 202 are aspartate; that stretch reads QQYK. L-aspartate-binding residues include Arg221 and His450. 221 to 223 lines the ATP pocket; it reads RDE. Glu484 lines the ATP pocket. Residue Arg491 coordinates L-aspartate. Position 536–539 (536–539) interacts with ATP; it reads GVDR.

The protein belongs to the class-II aminoacyl-tRNA synthetase family. Type 1 subfamily. Homodimer.

The protein resides in the cytoplasm. It catalyses the reaction tRNA(Asx) + L-aspartate + ATP = L-aspartyl-tRNA(Asx) + AMP + diphosphate. Its function is as follows. Aspartyl-tRNA synthetase with relaxed tRNA specificity since it is able to aspartylate not only its cognate tRNA(Asp) but also tRNA(Asn). Reaction proceeds in two steps: L-aspartate is first activated by ATP to form Asp-AMP and then transferred to the acceptor end of tRNA(Asp/Asn). The protein is Aspartate--tRNA(Asp/Asn) ligase of Nitrobacter hamburgensis (strain DSM 10229 / NCIMB 13809 / X14).